We begin with the raw amino-acid sequence, 475 residues long: Ribulose bisphosphate carboxylase large chain (475 aa).

The propeptide occupies 1 to 2 (MS). At Pro3 the chain carries N-acetylproline. The residue at position 14 (Lys14) is an N6,N6,N6-trimethyllysine. 2 residues coordinate substrate: Asn123 and Thr173. Catalysis depends on Lys175, which acts as the Proton acceptor. Residue Lys177 participates in substrate binding. Mg(2+) is bound by residues Lys201, Asp203, and Glu204. Lys201 carries the N6-carboxylysine modification. His294 (proton acceptor) is an active-site residue. Positions 295, 327, and 379 each coordinate substrate.

The protein belongs to the RuBisCO large chain family. Type I subfamily. Heterohexadecamer of 8 large chains and 8 small chains; disulfide-linked. The disulfide link is formed within the large subunit homodimers. The cofactor is Mg(2+). The disulfide bond which can form in the large chain dimeric partners within the hexadecamer appears to be associated with oxidative stress and protein turnover.

The protein resides in the plastid. It localises to the chloroplast. It carries out the reaction 2 (2R)-3-phosphoglycerate + 2 H(+) = D-ribulose 1,5-bisphosphate + CO2 + H2O. It catalyses the reaction D-ribulose 1,5-bisphosphate + O2 = 2-phosphoglycolate + (2R)-3-phosphoglycerate + 2 H(+). In terms of biological role, ruBisCO catalyzes two reactions: the carboxylation of D-ribulose 1,5-bisphosphate, the primary event in carbon dioxide fixation, as well as the oxidative fragmentation of the pentose substrate in the photorespiration process. Both reactions occur simultaneously and in competition at the same active site. This is Ribulose bisphosphate carboxylase large chain from Viscum album (European mistletoe).